Consider the following 363-residue polypeptide: Pyrimidine monooxygenase RutA (363 aa).

FMN-binding positions include 49–50, Asn-115, Glu-124, 140–141, and Ser-190; these read IK and RY.

This sequence belongs to the NtaA/SnaA/DszA monooxygenase family. RutA subfamily.

The catalysed reaction is uracil + FMNH2 + NADH + O2 = (Z)-3-ureidoacrylate + FMN + NAD(+) + H2O + H(+). It carries out the reaction thymine + FMNH2 + NADH + O2 = (Z)-2-methylureidoacrylate + FMN + NAD(+) + H2O + H(+). Catalyzes the pyrimidine ring opening between N-3 and C-4 by an unusual flavin hydroperoxide-catalyzed mechanism, adding oxygen atoms in the process to yield ureidoacrylate peracid, that immediately reacts with FMN forming ureidoacrylate and FMN-N(5)-oxide. The FMN-N(5)-oxide reacts spontaneously with NADH to produce FMN. Requires the flavin reductase RutF to regenerate FMN in vivo. The chain is Pyrimidine monooxygenase RutA from Klebsiella pneumoniae subsp. pneumoniae (strain ATCC 700721 / MGH 78578).